The following is a 437-amino-acid chain: Cytochrome b (437 aa).

The chain crosses the membrane as a helical span at residues 45-65 (WIWGIVLAFTLVLQIVTGIVL). Heme b contacts are provided by H97 and H111. A run of 9 helical transmembrane segments spans residues 100-120 (GASLFFLAVYIHIFRGLYYGS), 129-149 (WIVGMVIYLLMMGTAFMGYVL), 156-176 (FWGATVITGLFGAIPGIGPSI), 194-214 (FFSLHYLLPFVIAALVAIHIW), 248-268 (FVIKDLFALALVLLGFFAVVA), 298-318 (FLPFYAILRAFAADVWVVILV), 330-350 (FFGVIAMFGAIAVMALAPWLD), 365-385 (MWFWFLVLDFVVLTWVGAMPT), and 391-411 (WISLIASTYWFAYFLVILPLL). Residues H198 and H212 each coordinate heme b.

Belongs to the cytochrome b family. In terms of assembly, the main subunits of complex b-c1 are: cytochrome b, cytochrome c1 and the Rieske protein. It depends on heme b as a cofactor.

The protein localises to the cell membrane. In terms of biological role, component of the ubiquinol-cytochrome c reductase complex (complex III or cytochrome b-c1 complex), which is a respiratory chain that generates an electrochemical potential coupled to ATP synthesis. The chain is Cytochrome b (petB) from Rhodobacter capsulatus (Rhodopseudomonas capsulata).